The primary structure comprises 265 residues: 4-hydroxy-tetrahydrodipicolinate reductase (265 aa).

NAD(+)-binding positions include 7–12 (GASGRM) and Asp-33. NADP(+) is bound at residue Arg-34. NAD(+) contacts are provided by residues 96–98 (GTT) and 120–123 (AANM). Residue His-153 is the Proton donor/acceptor of the active site. His-154 provides a ligand contact to (S)-2,3,4,5-tetrahydrodipicolinate. Lys-157 serves as the catalytic Proton donor. Residue 163–164 (GT) coordinates (S)-2,3,4,5-tetrahydrodipicolinate.

The protein belongs to the DapB family.

The protein resides in the cytoplasm. The catalysed reaction is (S)-2,3,4,5-tetrahydrodipicolinate + NAD(+) + H2O = (2S,4S)-4-hydroxy-2,3,4,5-tetrahydrodipicolinate + NADH + H(+). It carries out the reaction (S)-2,3,4,5-tetrahydrodipicolinate + NADP(+) + H2O = (2S,4S)-4-hydroxy-2,3,4,5-tetrahydrodipicolinate + NADPH + H(+). The protein operates within amino-acid biosynthesis; L-lysine biosynthesis via DAP pathway; (S)-tetrahydrodipicolinate from L-aspartate: step 4/4. Functionally, catalyzes the conversion of 4-hydroxy-tetrahydrodipicolinate (HTPA) to tetrahydrodipicolinate. The chain is 4-hydroxy-tetrahydrodipicolinate reductase from Burkholderia orbicola (strain AU 1054).